Reading from the N-terminus, the 708-residue chain is Fatty acid oxidation complex subunit alpha (708 aa).

Residues 1–190 are enoyl-CoA hydratase; sequence MDMEKTFNLT…KMGLVDDAVP (190 aa). The tract at residues 310-708 is 3-hydroxyacyl-CoA dehydrogenase; it reads QKVNKVMVLG…MAEEGTRFFS (399 aa).

The protein in the N-terminal section; belongs to the enoyl-CoA hydratase/isomerase family. This sequence in the central section; belongs to the 3-hydroxyacyl-CoA dehydrogenase family. Heterotetramer of two alpha chains (FadJ) and two beta chains (FadI).

It is found in the cytoplasm. It carries out the reaction a (3S)-3-hydroxyacyl-CoA = a (2E)-enoyl-CoA + H2O. The catalysed reaction is a 4-saturated-(3S)-3-hydroxyacyl-CoA = a (3E)-enoyl-CoA + H2O. The enzyme catalyses a (3S)-3-hydroxyacyl-CoA + NAD(+) = a 3-oxoacyl-CoA + NADH + H(+). It catalyses the reaction (3S)-3-hydroxybutanoyl-CoA = (3R)-3-hydroxybutanoyl-CoA. Its pathway is lipid metabolism; fatty acid beta-oxidation. In terms of biological role, catalyzes the formation of a hydroxyacyl-CoA by addition of water on enoyl-CoA. Also exhibits 3-hydroxyacyl-CoA epimerase and 3-hydroxyacyl-CoA dehydrogenase activities. This is Fatty acid oxidation complex subunit alpha from Shewanella halifaxensis (strain HAW-EB4).